Here is a 158-residue protein sequence, read N- to C-terminus: NAD(P)H-quinone oxidoreductase subunit J, chloroplastic (158 aa).

This sequence belongs to the complex I 30 kDa subunit family. As to quaternary structure, NDH is composed of at least 16 different subunits, 5 of which are encoded in the nucleus.

It is found in the plastid. The protein localises to the chloroplast thylakoid membrane. It carries out the reaction a plastoquinone + NADH + (n+1) H(+)(in) = a plastoquinol + NAD(+) + n H(+)(out). It catalyses the reaction a plastoquinone + NADPH + (n+1) H(+)(in) = a plastoquinol + NADP(+) + n H(+)(out). Functionally, NDH shuttles electrons from NAD(P)H:plastoquinone, via FMN and iron-sulfur (Fe-S) centers, to quinones in the photosynthetic chain and possibly in a chloroplast respiratory chain. The immediate electron acceptor for the enzyme in this species is believed to be plastoquinone. Couples the redox reaction to proton translocation, and thus conserves the redox energy in a proton gradient. In Solanum lycopersicum (Tomato), this protein is NAD(P)H-quinone oxidoreductase subunit J, chloroplastic.